The primary structure comprises 113 residues: UPF0482 protein YnfB (113 aa).

Positions 1-28 are cleaved as a signal peptide; the sequence is MKITLSKRIDLLAFLLPCALALSTTVHA.

Belongs to the UPF0482 family.

The chain is UPF0482 protein YnfB from Escherichia coli O157:H7.